The primary structure comprises 312 residues: Elongation factor Ts, mitochondrial (312 aa).

Belongs to the EF-Ts family.

It localises to the mitochondrion. Associates with the EF-Tu.GDP complex and induces the exchange of GDP to GTP. It remains bound to the aminoacyl-tRNA.EF-Tu.GTP complex up to the GTP hydrolysis stage on the ribosome. The sequence is that of Elongation factor Ts, mitochondrial (tsfm) from Xenopus laevis (African clawed frog).